Here is a 481-residue protein sequence, read N- to C-terminus: Transmembrane protein 39A (481 aa).

8 helical membrane-spanning segments follow: residues 74-94, 109-129, 150-170, 182-202, 278-298, 313-333, 411-431, and 437-457; these read LFETLLLLYLLVALLVQYINI, STSLNFHLMDAHLAVFIAVML, LCYVLLLVVRVCVLTLCGWVL, SVLKLLFLGYPFGVYVPLCCL, EVLFNSLLSAYYVAFLPLCFV, LIMVWINAFVMLMSHLLPPHY, LLNVLIGIECSVVVYQLYSLL, and NHTLSLGLILVCNYYVLFKLL.

This sequence belongs to the TMEM39 family.

The protein resides in the endoplasmic reticulum membrane. Functionally, regulates autophagy by controlling the spatial distribution and levels of the intracellular phosphatidylinositol 4-phosphate (PtdIns(4)P) pools. Modulates (PtdIns(4)P) levels by regulating the ER-to-Golgi trafficking of the phosphatidylinositide phosphatase SACM1L. This chain is Transmembrane protein 39A (tmem39a), found in Danio rerio (Zebrafish).